The following is a 282-amino-acid chain: Acetylglutamate kinase (282 aa).

Substrate contacts are provided by residues 62–63 (GG), Arg-84, and Asn-178.

The protein belongs to the acetylglutamate kinase family. ArgB subfamily.

Its subcellular location is the cytoplasm. It carries out the reaction N-acetyl-L-glutamate + ATP = N-acetyl-L-glutamyl 5-phosphate + ADP. It functions in the pathway amino-acid biosynthesis; L-arginine biosynthesis; N(2)-acetyl-L-ornithine from L-glutamate: step 2/4. Catalyzes the ATP-dependent phosphorylation of N-acetyl-L-glutamate. The sequence is that of Acetylglutamate kinase from Thermotoga neapolitana (strain ATCC 49049 / DSM 4359 / NBRC 107923 / NS-E).